The chain runs to 246 residues: Probable transcriptional regulatory protein ORF2U (246 aa).

Belongs to the TACO1 family.

It localises to the cytoplasm. The polypeptide is Probable transcriptional regulatory protein ORF2U (Hathewaya histolytica (Clostridium histolyticum)).